A 389-amino-acid polypeptide reads, in one-letter code: Alpha-(1,3)-fucosyltransferase 7 (389 aa).

The Cytoplasmic segment spans residues 1-55 (MPTPCPPACLSTPGTHRLLPFPDWKAPSWESRKEATCNSSSPGPWAEPTVQGYHP). A helical; Signal-anchor for type II membrane protein membrane pass occupies residues 56–78 (TRRLRAWGGLAGGATFMVIWFFW). Residues 79–389 (LWGSAPGSAP…YEDLESWFQA (311 aa)) are Lumenal-facing. A disulfide bridge links cysteine 115 with cysteine 123. N-linked (GlcNAc...) asparagine glycosylation occurs at asparagine 128. A disulfide bond links cysteine 258 and cysteine 261. A glycan (N-linked (GlcNAc...) asparagine) is linked at asparagine 338. A disulfide bond links cysteine 365 and cysteine 368.

It belongs to the glycosyltransferase 10 family. In terms of processing, N-glycosylated. In terms of tissue distribution, highly expressed in lung and bone marrow and to a much lesser extent in spleen, salivary gland and skeletal muscle.

The protein localises to the golgi apparatus. It is found in the golgi stack membrane. The enzyme catalyses an N-acetyl-alpha-neuraminyl-(2-&gt;3)-beta-D-galactosyl-(1-&gt;4)-N-acetyl-beta-D-glucosaminyl derivative + GDP-beta-L-fucose = an alpha-Neu5Ac-(2-&gt;3)-beta-D-Gal-(1-&gt;4)-[alpha-L-Fuc-(1-&gt;3)]-beta-D-GlcNAc derivative + GDP + H(+). It catalyses the reaction an alpha-Neu5Ac-(2-&gt;3)-beta-D-Gal-(1-&gt;4)-beta-D-GlcNAc6S derivative + GDP-beta-L-fucose = an alpha-Neu5Ac-(2-&gt;3)-beta-D-Gal-(1-&gt;4)-[alpha-L-Fuc-(1-&gt;3)]-beta-D-GlcNAc6S derivative + GDP + H(+). It carries out the reaction a neolactoside IV(3)-alpha-NeuAc-nLc4Cer + GDP-beta-L-fucose = a neolactoside IV(3)-alpha-NeuNAc,III(3)-alpha-Fuc-nLc4Cer + GDP + H(+). The catalysed reaction is a neolactoside VI(3)-alpha-NeuNAc-nLc6Cer + GDP-beta-L-fucose = a neolactoside VI(3)-alpha-NeuAc,V(3)-alphaFuc-nLc6Cer + GDP + H(+). The enzyme catalyses an alpha-Neu5Ac-(2-&gt;3)-beta-D-Gal-(1-&gt;4)-beta-D-GlcNAc-(1-&gt;3)-beta-D-Gal-(1-&gt;4)-[alpha-L-Fuc-(1-&gt;3)]-beta-D-GlcNAc derivative + GDP-beta-L-fucose = an alpha-Neu5Ac-(2-&gt;3)-beta-D-Gal-(1-&gt;4)-[alpha-L-Fuc-(1-&gt;3)]-beta-D-GlcNAc-(1-&gt;3)-beta-D-Gal-(1-&gt;4)-[alpha-L-Fuc-(1-&gt;3)]-beta-D-GlcNAc derivative + GDP + H(+). It catalyses the reaction alpha-Neu5Ac-(2-&gt;3)-beta-D-Gal-(1-&gt;4)-beta-D-GlcNAc-(1-&gt;3)-beta-D-Gal-(1-&gt;4)-D-Glc + GDP-beta-L-fucose = alpha-Neu5Ac-(2-&gt;3)-beta-D-Gal-(1-&gt;4)-[alpha-L-Fuc-(1-&gt;3)]-beta-D-GlcNAc-(1-&gt;3)-beta-D-Gal-(1-&gt;4)-D-Glc + GDP + H(+). It carries out the reaction alpha-Neu5Ac-(2-&gt;3)-beta-D-Gal-(1-&gt;4)-beta-D-GlcNAc-(1-&gt;3)-beta-D-Gal-(1-&gt;4)-[alpha-L-Fuc-(1-&gt;3)]-beta-D-GlcNAc-(1-&gt;3)-beta-D-Gal-(1-&gt;4)-beta-D-GlcNAc + GDP-beta-L-fucose = alpha-Neu5Ac-(2-&gt;3)-beta-D-Gal-(1-&gt;4)-[alpha-L-Fuc-(1-&gt;3)]-beta-D-GlcNAc-(1-&gt;3)-beta-D-Gal-(1-&gt;4)-[alpha-L-Fuc-(1-&gt;3)]-beta-D-GlcNAc-(1-&gt;3)-beta-D-Gal-(1-&gt;4)-beta-D-GlcNAc + GDP + H(+). The catalysed reaction is alpha-Neu5Ac-(2-&gt;3)-beta-D-Gal-(1-&gt;4)-beta-D-GlcNAc-(1-&gt;3)-beta-D-Gal-(1-&gt;4)-beta-D-GlcNAc-(1-&gt;3)-beta-D-Gal-(1-&gt;4)-beta-D-GlcNAc + GDP-beta-L-fucose = alpha-Neu5Ac-(2-&gt;3)-beta-D-Gal-(1-&gt;4)-[alpha-L-Fuc-(1-&gt;3)]-beta-D-GlcNAc-(1-&gt;3)-beta-D-Gal-(1-&gt;4)-beta-D-GlcNAc-(1-&gt;3)-beta-D-Gal-(1-&gt;4)-beta-D-GlcNAc + GDP + H(+). It functions in the pathway protein modification; protein glycosylation. Its activity is regulated as follows. Inhibited by NaCl. Inhibited by GDP in a concentration dependent manner, with an IC(50) value of 93 uM. Also inhibited by GMP and GTP. Inhibited by N-ethylmaleimide. Activated by poly(ethylene glycol) by enhancing the thermal stability of FUT7. Activated by Mn2+, Ca2+, and Mg2+. Both panosialin A and B inhibit activity with IC(50) values of 4.8 and 5.3 ug/ml, respectively. Inhibited by gallic acid (GA) and (-)-epigallocatechin gallate (EGCG) in a time-dependent and irreversible manner with IC(50) values of 60 and 700 nM, respectively. Its function is as follows. Catalyzes the transfer of L-fucose, from a guanosine diphosphate-beta-L-fucose, to the N-acetyl glucosamine (GlcNAc) of a distal alpha2,3 sialylated lactosamine unit of a glycoprotein or a glycolipid-linked sialopolylactosamines chain through an alpha-1,3 glycosidic linkage and participates in the final fucosylation step in the biosynthesis of the sialyl Lewis X (sLe(x)), a carbohydrate involved in cell and matrix adhesion during leukocyte trafficking and fertilization. In vitro, also synthesizes sialyl-dimeric-Lex structures, from VIM-2 structures and both di-fucosylated and trifucosylated structures from mono-fucosylated precursors. However does not catalyze alpha 1-3 fucosylation when an internal alpha 1-3 fucosylation is present in polylactosamine chain and the fucosylation rate of the internal GlcNAc residues is reduced once fucose has been added to the distal GlcNAc. Also catalyzes the transfer of a fucose from GDP-beta-fucose to the 6-sulfated a(2,3)sialylated substrate to produce 6-sulfo sLex mediating significant L-selectin-dependent cell adhesion. Through sialyl-Lewis(x) biosynthesis, can control SELE- and SELP-mediated cell adhesion with leukocytes and allows leukocytes tethering and rolling along the endothelial tissue thereby enabling the leukocytes to accumulate at a site of inflammation. May enhance embryo implantation through sialyl Lewis X (sLeX)-mediated adhesion of embryo cells to endometrium. May affect insulin signaling by up-regulating the phosphorylation and expression of some signaling molecules involved in the insulin-signaling pathway through SLe(x) which is present on the glycans of the INSRR alpha subunit. The chain is Alpha-(1,3)-fucosyltransferase 7 from Mus musculus (Mouse).